A 422-amino-acid polypeptide reads, in one-letter code: Nucleoside transporter 1 (422 aa).

Over 1–38 (MSTGKESSKAYADIESRGDYKDDGKKGSTLSSKQHFML) the chain is Cytoplasmic. A helical membrane pass occupies residues 39–59 (SLTFILIGLSSLNVWNTALGL). Trp-53 contacts inosine. Over 60–63 (NINF) the chain is Extracellular. A helical transmembrane segment spans residues 64–82 (KYNTFQITGLVCSSIVALF). The Cytoplasmic segment spans residues 83–87 (VEIPK). Residues 88 to 107 (IMLPFLLGGLSILCAGFQIS) traverse the membrane as a helical segment. At 108–116 (HSFFTDTQF) the chain is on the extracellular side. A helical membrane pass occupies residues 117-139 (DTYCLVAFIVIGVVAGLAQTIAF). Inosine is bound at residue Gln-135. Residues 140–149 (NIGSTMEDNM) lie on the Cytoplasmic side of the membrane. The chain crosses the membrane as a helical span at residues 150-174 (GGYMSAGIGISGVFIFVINLLLDQF). Topologically, residues 175 to 185 (VSPEKHYGVNK) are extracellular. The helical transmembrane segment at 186–208 (AKLLYLYIICELCLILAIVFCVC) threads the bilayer. Residues 209 to 241 (NLDLTNKNNKKDEENKENNATLSYMELFKDSYK) are Cytoplasmic-facing. The helical transmembrane segment at 242 to 265 (AILTMFLVNWLTLQLFPGVGHKKW) threads the bilayer. Over 266 to 274 (QESHNISDY) the chain is Extracellular. Residues 275 to 294 (NVTIIVGMFQVFDFLSRYPP) traverse the membrane as a helical segment. Inosine-binding residues include Asp-287 and Arg-291. Residues 295–309 (NLTHIKIFKNFTFSL) are Cytoplasmic-facing. The chain crosses the membrane as a helical span at residues 310–330 (NKLLVANSLRLLFIPWFILNA). Residues 331-338 (CVDHPFFK) are Extracellular-facing. Residues 339-362 (NIVQQCVCMAMLAFTNGWFNTVPF) traverse the membrane as a helical segment. The Cytoplasmic segment spans residues 363–374 (LVFVKELKKAKK). Residues 375–397 (KKEIEIISTFLVIAMFVGLFCGI) form a helical membrane-spanning segment. The Extracellular portion of the chain corresponds to 398–422 (WTTYIYNLFNIVLPKPDLPPIDVTQ).

The protein belongs to the SLC29A/ENT transporter (TC 2.A.57) family.

It localises to the cell membrane. The catalysed reaction is inosine(in) = inosine(out). It carries out the reaction adenosine(in) = adenosine(out). The enzyme catalyses hypoxanthine(out) = hypoxanthine(in). It catalyses the reaction guanosine(in) = guanosine(out). The catalysed reaction is guanine(out) = guanine(in). It carries out the reaction thymidine(in) = thymidine(out). The enzyme catalyses uridine(out) = uridine(in). It catalyses the reaction uracil(in) = uracil(out). The catalysed reaction is thymine(out) = thymine(in). It carries out the reaction adenine(out) = adenine(in). The enzyme catalyses cytosine(out) = cytosine(in). It catalyses the reaction xanthine(out) = xanthine(in). GSK4 (5-methyl-N-[2-(2-oxo-1-azepanyl)ethyl]-2-phenyl-1,3-oxazole-4-carbox-amide) disrupts the transport activity at 500 nM. Inhibited partially by 10 uM dipyridamole. Inhibited partially by N,N'-1,3-benzothiazole-2,6-diyldi(2-furamide), 2-bromo-N-(4-[1,3]oxazolo[4,5-b]pyridin-2-ylphenyl)benzamide, 4-methyl-7-[(3,4,5-trimethoxybenzyl)oxy]-2H-chromen-2-one, 2-(1-methyl-1H-indol-3-yl)-2-oxo-N-[4-(pyrrolidin-1-ylcarbonyl)phenyl]acet amide and 2-[2-(2-methylphenyl)vinyl]-4(3H)-quinazolinone. Its function is as follows. Sodium-independent nucleoside and nucleobase transporter with a broad substrate specificity. Plays a key role in the utilization of host purine sources by P.falciparum during intraerythrocytic development enabling parasite growth in the presence of physiological concentrations of adenosine, inosine, guanine, guanosine, xanthine and hypoxanthine. Essential for parasite transition from ring to trophozoite or from trophozoite to schizont stage but not for erythrocyte invasion by merozoites. The protein is Nucleoside transporter 1 of Plasmodium falciparum (isolate 3D7).